Here is a 1030-residue protein sequence, read N- to C-terminus: MGPRCTLHPLSLLVQVTALAAALAQGRLPAFLPCELQPHGLVNCNWLFLKSVPHFSAAAPRANVTSLSLLSNRIHHLHDSDFVHLSSLRTLNLKWNCPPAGLSPMHFPCHMTIEPNTFLAVPTLEELNLSYNSITTVPALPDSLVSLSLSRTNILVLDPTHLTGLHALRYLYMDGNCYYKNPCQGALEVVPGALLGLGNLTHLSLKYNNLTEVPRSLPPSLETLLLSYNHIVTLTPEDLANLTALRVLDVGGNCRRCDHARNPCRECPKDHPKLHSDTFSHLSRLEGLVLKDSSLYNLDTRWFRGLDRLQVLDLSENFLYDCITKTTAFQGLARLRSLNLSFNYHKKVSFAHLHLAPSFGHLRSLKELDMHGIFFRSLSETTLQPLVQLPMLQTLRLQMNFINQAQLSIFGAFPGLLYVDLSDNRISGAARPVAITREVDGRERVWLPSRNLAPRPLDTLRSEDFMPNCKAFSFTLDLSRNNLVTIQSEMFARLSRLECLRLSHNSISQAVNGSQFVPLTSLRVLDLSHNKLDLYHGRSFTELPRLEALDLSYNSQPFTMQGVGHNLSFVAQLPALRYLSLAHNDIHSRVSQQLCSASLCALDFSGNDLSRMWAEGDLYLRFFQGLRSLVWLDLSQNHLHTLLPRALDNLPKSLKHLHLRDNNLAFFNWSSLTLLPKLETLDLAGNQLKALSNGSLPSGTQLRRLDLSGNSIGFVNPGFFALAKQLEELNLSANALKTVEPSWFGSMVGNLKVLDVSANPLHCACGATFVGFLLEVQAAVPGLPSRVKCGSPGQLQGHSIFAQDLRLCLDETLSWNCFGISLLAMALGLVVPMLHHLCGWDLWYCFHLCLAWLPHRGQRRGADALFYDAFVVFDKAQSAVADWVYNELRVQLEERRGRRALRLCLEERDWLPGKTLFENLWASVYSSRKTLFVLAHTDRVSGLLRASFLLAQQRLLEDRKDVVVLVILRPDAYRSRYVRLRQRLCRQSVLLWPHQPRGQGSFWAQLGTALTRDNHHFYNRNFCRGPTTAE.

The first 24 residues, 1–24, serve as a signal peptide directing secretion; that stretch reads MGPRCTLHPLSLLVQVTALAAALA. The Extracellular portion of the chain corresponds to 25 to 816; that stretch reads QGRLPAFLPC…LCLDETLSWN (792 aa). The cysteines at positions 34 and 44 are disulfide-linked. 46–50 provides a ligand contact to DNA; it reads WLFLK. 26 LRR repeats span residues 61 to 84, 86 to 109, 121 to 146, 149 to 165, 166 to 189, 197 to 220, 222 to 241, 242 to 267, 282 to 305, 307 to 331, 332 to 355, 362 to 385, 389 to 412, 414 to 439, 469 to 493, 495 to 518, 519 to 542, 544 to 571, 573 to 597, 599 to 621, 626 to 649, 651 to 674, 675 to 698, 700 to 722, 723 to 746, and 748 to 771; these read RANV…DFVH, SSLR…HFPC, VPTL…SLVS, LSRT…LTGL, HALR…ALEV, LGNL…LPPS, ETLL…DLAN, LTAL…CREC, LSRL…WFRG, DRLQ…AFQG, LARL…HLHL, LRSL…TLQP, LPML…IFGA, PGLL…TREV, CKAF…MFAR, SRLE…QFVP, LTSL…SFTE, PRLE…SFVA, LPAL…LCSA, LCAL…LYLR, LRSL…ALDN, PKSL…SLTL, LPKL…SLPS, TQLR…FFAL, AKQL…WFGS, and VGNL…TFVG. The N-linked (GlcNAc...) asparagine glycan is linked to N63. DNA is bound by residues 71 to 76 and 94 to 108; these read SNRIHH and KWNC…MHFP. The cysteines at positions 97 and 109 are disulfide-linked. An N-linked (GlcNAc...) asparagine glycan is attached at N128. DNA contacts are provided by residues Y131, R151, and 178-180; that span reads YYK. A disulfide bridge links C177 with C183. Residue N199 is glycosylated (N-linked (GlcNAc...) asparagine). Y207 serves as a coordination point for DNA. Residues N209 and N241 are each glycosylated (N-linked (GlcNAc...) asparagine). 2 disulfide bridges follow: C254/C267 and C257/C264. C257 carries S-palmitoyl cysteine lipidation. R261 contacts DNA. A lipid anchor (S-palmitoyl cysteine) is attached at C264. N339 carries N-linked (GlcNAc...) asparagine glycosylation. Cysteines 469 and 499 form a disulfide. N512 carries N-linked (GlcNAc...) asparagine glycosylation. An N-linked (GlcNAc...) asparagine glycan is attached at N566. 2 N-linked (GlcNAc...) asparagine glycosylation sites follow: N668 and N693. N730 is a glycosylation site (N-linked (GlcNAc...) asparagine). 2 disulfides stabilise this stretch: C763-C789 and C765-C808. A helical membrane pass occupies residues 817–837; it reads CFGISLLAMALGLVVPMLHHL. The Cytoplasmic portion of the chain corresponds to 838-1030; the sequence is CGWDLWYCFH…NFCRGPTTAE (193 aa). One can recognise a TIR domain in the interval 865 to 1010; it reads LFYDAFVVFD…SFWAQLGTAL (146 aa).

The protein belongs to the Toll-like receptor family. Monomer and homodimer. Exists as a monomer in the absence of unmethylated cytidine-phosphate-guanosine (CpG) ligand. Proteolytic processing of an insertion loop (Z-loop) is required for homodimerization upon binding to the unmethylated CpG ligand leading to its activation. Interacts with MYD88 via their respective TIR domains. Interacts with BTK. Interacts (via transmembrane domain) with UNC93B1. Interacts with CD300LH; the interaction may promote full activation of TLR9-triggered innate responses. Interacts with CNPY3 and HSP90B1; this interaction is required for proper folding in the endoplasmic reticulum. Interacts with SMPDL3B. Interacts with CD82; this interaction is essential for TLR9-dependent myddosome formation in response to CpG stimulation. In terms of processing, activated by proteolytic cleavage of the flexible loop between repeats LRR14 and LRR15 within the ectodomain. Cleavage requires UNC93B1. Proteolytically processed by first removing the majority of the ectodomain by either asparagine endopeptidase (AEP) or a cathepsin followed by a trimming event that is solely cathepsin mediated and required for optimal receptor signaling. Palmitoylated by ZDHHC3 in the Golgi regulates TLR9 trafficking from the Golgi to endosomes. Depalmitoylation by PPT1 controls the release of TLR9 from UNC93B1 in endosomes.

Its subcellular location is the endoplasmic reticulum membrane. It localises to the endosome. The protein localises to the lysosome. It is found in the cytoplasmic vesicle. The protein resides in the phagosome. In terms of biological role, key component of innate and adaptive immunity. TLRs (Toll-like receptors) control host immune response against pathogens through recognition of molecular patterns specific to microorganisms. TLR9 is a nucleotide-sensing TLR which is activated by unmethylated cytidine-phosphate-guanosine (CpG) dinucleotides. Acts via MYD88 and TRAF6, leading to NF-kappa-B activation, cytokine secretion and the inflammatory response. Upon CpG stimulation, induces B-cell proliferation, activation, survival and antibody production. This Sus scrofa (Pig) protein is Toll-like receptor 9 (TLR9).